The primary structure comprises 384 residues: Bifunctional enzyme IspD/IspF (384 aa).

The tract at residues 1–226 (MAKTVVLVVA…RCLFDGPGEV (226 aa)) is 2-C-methyl-D-erythritol 4-phosphate cytidylyltransferase. Positions 227–384 (RSASGYDVHR…QAMASVWLPR (158 aa)) are 2-C-methyl-D-erythritol 2,4-cyclodiphosphate synthase. A divalent metal cation contacts are provided by Asp233 and His235. Residues 233–235 (DVH) and 260–261 (HS) contribute to the 4-CDP-2-C-methyl-D-erythritol 2-phosphate site. Residue His268 coordinates a divalent metal cation. Residues 282–284 (DIG), 358–361 (TTTE), Phe365, and Arg368 contribute to the 4-CDP-2-C-methyl-D-erythritol 2-phosphate site.

This sequence in the N-terminal section; belongs to the IspD/TarI cytidylyltransferase family. IspD subfamily. The protein in the C-terminal section; belongs to the IspF family. A divalent metal cation is required as a cofactor.

It carries out the reaction 2-C-methyl-D-erythritol 4-phosphate + CTP + H(+) = 4-CDP-2-C-methyl-D-erythritol + diphosphate. It catalyses the reaction 4-CDP-2-C-methyl-D-erythritol 2-phosphate = 2-C-methyl-D-erythritol 2,4-cyclic diphosphate + CMP. The protein operates within isoprenoid biosynthesis; isopentenyl diphosphate biosynthesis via DXP pathway; isopentenyl diphosphate from 1-deoxy-D-xylulose 5-phosphate: step 2/6. It functions in the pathway isoprenoid biosynthesis; isopentenyl diphosphate biosynthesis via DXP pathway; isopentenyl diphosphate from 1-deoxy-D-xylulose 5-phosphate: step 4/6. Bifunctional enzyme that catalyzes the formation of 4-diphosphocytidyl-2-C-methyl-D-erythritol from CTP and 2-C-methyl-D-erythritol 4-phosphate (MEP) (IspD), and catalyzes the conversion of 4-diphosphocytidyl-2-C-methyl-D-erythritol 2-phosphate (CDP-ME2P) to 2-C-methyl-D-erythritol 2,4-cyclodiphosphate (ME-CPP) with a corresponding release of cytidine 5-monophosphate (CMP) (IspF). This chain is Bifunctional enzyme IspD/IspF, found in Paramagnetospirillum magneticum (strain ATCC 700264 / AMB-1) (Magnetospirillum magneticum).